The chain runs to 234 residues: HTH-type transcriptional regulator ArcR (234 aa).

40-129 (VRHYTKGQVI…MAFLCKANDD (90 aa)) provides a ligand contact to a nucleoside 3',5'-cyclic phosphate. One can recognise an HTH crp-type domain in the interval 155–228 (KFAKDRIIKL…HKNWLVSKHL (74 aa)). The segment at residues 188 to 207 (IQLMSDMAGISRETAGHIIH) is a DNA-binding region (H-T-H motif).

It localises to the cytoplasm. Its function is as follows. Positively regulates the expression of the arcABDCR operon under anaerobic conditions, thus playing an essential role in arginine catabolism. May also control the expression of genes encoding proteins which are involved in anaerobic metabolism. Can bind cyclic AMP. The chain is HTH-type transcriptional regulator ArcR (arcR) from Staphylococcus aureus (strain Mu50 / ATCC 700699).